The chain runs to 247 residues: ATP synthase subunit a, plastid (247 aa).

The next 5 helical transmembrane spans lie at 33–53 (FLVH…LLGS), 95–115 (VPFI…GALL), 134–154 (INTT…AGIL), 199–219 (LVVV…VMLL), and 220–240 (GLFT…AYIG).

Belongs to the ATPase A chain family. F-type ATPases have 2 components, CF(1) - the catalytic core - and CF(0) - the membrane proton channel. CF(1) has five subunits: alpha(3), beta(3), gamma(1), delta(1), epsilon(1). CF(0) has four main subunits: a, b, b' and c.

It localises to the plastid membrane. In terms of biological role, key component of the proton channel; it plays a direct role in the translocation of protons across the membrane. The sequence is that of ATP synthase subunit a, plastid from Cuscuta exaltata (Tall dodder).